We begin with the raw amino-acid sequence, 168 residues long: Ribonuclease H (168 aa).

The 142-residue stretch at 10–151 (NNIPVKIYTD…ADKLATNGKI (142 aa)) folds into the RNase H type-1 domain. Mg(2+)-binding residues include D19, E57, D79, and D143.

Belongs to the RNase H family. Monomer. Mg(2+) is required as a cofactor.

It is found in the cytoplasm. The catalysed reaction is Endonucleolytic cleavage to 5'-phosphomonoester.. In terms of biological role, endonuclease that specifically degrades the RNA of RNA-DNA hybrids. The sequence is that of Ribonuclease H from Orientia tsutsugamushi (strain Boryong) (Rickettsia tsutsugamushi).